Reading from the N-terminus, the 486-residue chain is Cardiolipin synthase A (486 aa).

A run of 2 helical transmembrane segments spans residues 3–23 (IFYNLIKCLIFSTYWLLIANI) and 38–58 (MSWLLTIYIIPFIGISIWFFF). PLD phosphodiesterase domains lie at 219–246 (VDVRQHRKIILIDNYIAYSGSMNLVDPY) and 399–426 (QKGLLHSKSILVDQQLSLIGTVNLDMRS). Active-site residues include histidine 224, lysine 226, aspartate 231, histidine 404, lysine 406, and aspartate 411.

Belongs to the phospholipase D family. Cardiolipin synthase subfamily. ClsA sub-subfamily.

Its subcellular location is the cell inner membrane. It catalyses the reaction 2 a 1,2-diacyl-sn-glycero-3-phospho-(1'-sn-glycerol) = a cardiolipin + glycerol. Its function is as follows. Catalyzes the reversible phosphatidyl group transfer from one phosphatidylglycerol molecule to another to form cardiolipin (CL) (diphosphatidylglycerol) and glycerol. The polypeptide is Cardiolipin synthase A (Buchnera aphidicola subsp. Acyrthosiphon pisum (strain 5A)).